Consider the following 65-residue polypeptide: UPF0434 protein PSHAa1659 (65 aa).

Belongs to the UPF0434 family.

The protein is UPF0434 protein PSHAa1659 of Pseudoalteromonas translucida (strain TAC 125).